Reading from the N-terminus, the 179-residue chain is Ribosome maturation factor RimM (179 aa).

The PRC barrel domain maps to 96-179; the sequence is DNEFYWVDLI…KITVDWGLDY (84 aa).

This sequence belongs to the RimM family. In terms of assembly, binds ribosomal protein uS19.

Its subcellular location is the cytoplasm. Its function is as follows. An accessory protein needed during the final step in the assembly of 30S ribosomal subunit, possibly for assembly of the head region. Essential for efficient processing of 16S rRNA. May be needed both before and after RbfA during the maturation of 16S rRNA. It has affinity for free ribosomal 30S subunits but not for 70S ribosomes. The chain is Ribosome maturation factor RimM from Janthinobacterium sp. (strain Marseille) (Minibacterium massiliensis).